We begin with the raw amino-acid sequence, 708 residues long: B-cell lymphoma 6 protein homolog (708 aa).

A BTB domain is found at 32 to 99 (TDVVIIVNRE…MYTSRLNLRE (68 aa)). A compositionally biased stretch (basic and acidic residues) spans 303-317 (AKEEERTSSEDEISQ). Disordered regions lie at residues 303–371 (AKEE…KSPT) and 431–470 (PTKM…QSPL). Composition is skewed to polar residues over residues 333–370 (SPQS…TKSP) and 431–454 (PTKM…NIVN). 6 C2H2-type zinc fingers span residues 520-543 (FFCN…LQVH), 548-570 (YKCD…KTVH), 576-598 (YRCN…TRIH), 604-626 (YKCE…VLIH), 632-654 (YPCE…LRIH), and 660-683 (YHCE…RQKH).

It localises to the nucleus. Transcriptional repressor mainly required for germinal center (GC) formation and antibody affinity maturation which has different mechanisms of action specific to the lineage and biological functions. Forms complexes with different corepressors and histone deacetylases to repress the transcriptional expression of different subsets of target genes. Represses its target genes by binding directly to the DNA sequence 5'-TTCCTAGAA-3' (BCL6-binding site) or indirectly by repressing the transcriptional activity of transcription factors. In GC B-cells, represses genes that function in differentiation, inflammation, apoptosis and cell cycle control, also autoregulates its transcriptional expression and up-regulates, indirectly, the expression of some genes important for GC reactions, such as AICDA, through the repression of microRNAs expression. An important function is to allow GC B-cells to proliferate very rapidly in response to T-cell dependent antigens and tolerate the physiological DNA breaks required for immunglobulin class switch recombination and somatic hypermutation without inducing a p53/TP53-dependent apoptotic response. In follicular helper CD4(+) T-cells (T(FH) cells), promotes the expression of T(FH)-related genes but inhibits the differentiation of T(H)1, T(H)2 and T(H)17 cells. Also required for the establishment and maintenance of immunological memory for both T- and B-cells. Suppresses macrophage proliferation through competition with STAT5 for STAT-binding motifs binding on certain target genes, such as CCL2 and CCND2. In response to genotoxic stress, controls cell cycle arrest in GC B-cells in both p53/TP53-dependedent and -independent manners. Besides, also controls neurogenesis through the alteration of the composition of NOTCH-dependent transcriptional complexes at selective NOTCH targets, such as HES5, including the recruitment of the deacetylase SIRT1 and resulting in an epigenetic silencing leading to neuronal differentiation. The polypeptide is B-cell lymphoma 6 protein homolog (Gallus gallus (Chicken)).